The primary structure comprises 87 residues: MTKVFCKKYHQELDAIPFQPLPGELGKKIHNEISNKAWQAWLAHQTILINEYRLNLIEPKAKEFLKEEMYKFLFEGKEEKPEQFSEI.

Belongs to the Fe(2+)-trafficking protein family.

Could be a mediator in iron transactions between iron acquisition and iron-requiring processes, such as synthesis and/or repair of Fe-S clusters in biosynthetic enzymes. In Francisella tularensis subsp. holarctica (strain FTNF002-00 / FTA), this protein is Probable Fe(2+)-trafficking protein.